The following is a 661-amino-acid chain: Polyadenylate-binding protein, cytoplasmic and nuclear (661 aa).

Residues 1–11 (MSAAETNQVQE) are compositionally biased toward polar residues. Residues 1-61 (MSAAETNQVQ…SAEEQGESSG (61 aa)) form a disordered region. The segment covering 20-51 (SSSSPAAGGATTATTTNNAESSDATSSSVPAD) has biased composition (low complexity). RRM domains lie at 67–145 (ASLY…WSQR), 155–232 (GNIF…KHVS), 248–325 (TNIY…RAQK), and 351–428 (VNLF…LAQR). The interval 473–563 (FPPNGRGNAP…PNRPAGGNVP (91 aa)) is disordered. Pro residues predominate over residues 501 to 511 (EQWPRPGPNGQ). Residues 523 to 532 (QDFNGQNMRP) are compositionally biased toward polar residues. Positions 533–549 (QQQQQQQQQQQQQQQQQ) are enriched in low complexity. Residues 563–644 (PAKDLAALIA…ALNAFEEYKN (82 aa)) form the PABC domain.

This sequence belongs to the polyadenylate-binding protein type-1 family.

The protein localises to the cytoplasm. The protein resides in the nucleus. Its function is as follows. Binds the poly(A) tail of mRNA. Appears to be an important mediator of the multiple roles of the poly(A) tail in mRNA biogenesis, stability and translation. In the nucleus, involved in both mRNA cleavage and polyadenylation. Is also required for efficient mRNA export to the cytoplasm. Acts in concert with a poly(A)-specific nuclease (PAN) to affect poly(A) tail shortening, which may occur concomitantly with either nucleocytoplasmic mRNA transport or translational initiation. In the cytoplasm, stimulates translation initiation and regulates mRNA decay through translation termination-coupled poly(A) shortening, probably mediated by PAN. This is Polyadenylate-binding protein, cytoplasmic and nuclear (PAB1) from Lodderomyces elongisporus (strain ATCC 11503 / CBS 2605 / JCM 1781 / NBRC 1676 / NRRL YB-4239) (Yeast).